The chain runs to 392 residues: Gastricsin (392 aa).

The N-terminal stretch at 1 to 16 (MKWMVVALLCLPLLEA) is a signal peptide. The propeptide at 17 to 62 (SLLRVPLRKMKSIRETMKEQGVLKDFLKTHKYDPGQKYHFGNFGDY) is activation peptide. The Peptidase A1 domain maps to 76–389 (YFGEISIGTP…DMGNNKVGLA (314 aa)). Asp-94 is a catalytic residue. Cystine bridges form between Cys-107–Cys-112 and Cys-270–Cys-275. Asp-280 is an active-site residue. A disulfide bridge connects residues Cys-314 and Cys-347.

Belongs to the peptidase A1 family.

The protein resides in the secreted. It catalyses the reaction More restricted specificity than pepsin A, but shows preferential cleavage at Tyr-|-Xaa bonds. High activity on hemoglobin.. Its function is as follows. Hydrolyzes a variety of proteins. This is Gastricsin (Pgc) from Rattus norvegicus (Rat).